A 339-amino-acid polypeptide reads, in one-letter code: Dihydroorotate dehydrogenase (quinone) (339 aa).

FMN is bound by residues 61 to 65 (AGLDK) and Thr-85. Lys-65 is a substrate binding site. 110–114 (NRMGF) provides a ligand contact to substrate. Asn-138 and Asn-171 together coordinate FMN. Asn-171 serves as a coordination point for substrate. Residue Ser-174 is the Nucleophile of the active site. Asn-176 serves as a coordination point for substrate. Residues Lys-216 and Thr-244 each contribute to the FMN site. 245–246 (NT) is a binding site for substrate. FMN contacts are provided by residues Gly-267, Gly-296, and 317-318 (YS).

The protein belongs to the dihydroorotate dehydrogenase family. Type 2 subfamily. Monomer. The cofactor is FMN.

The protein localises to the cell membrane. The catalysed reaction is (S)-dihydroorotate + a quinone = orotate + a quinol. It functions in the pathway pyrimidine metabolism; UMP biosynthesis via de novo pathway; orotate from (S)-dihydroorotate (quinone route): step 1/1. Catalyzes the conversion of dihydroorotate to orotate with quinone as electron acceptor. This is Dihydroorotate dehydrogenase (quinone) from Pseudomonas fluorescens (strain Pf0-1).